We begin with the raw amino-acid sequence, 247 residues long: MQVEAHLQKIIDQDGKVHLTLIDPASQTPERAAEIALAAVEGGTDAIMIGGSTGASGTLLDETVIKIKEKVNVPTILFPGSSAGLSSYADAVFFMSLLNSRDLGYVITNQVLGAPLVYKSQIEPISMAYLVVEPGGTVGWVGDAKLIPRKKPDIAAVYALAGKYLGMHYTYLEAGSGADAPIPPEMIGAVKKVLGENKLIVGGGVRDAKTAKLCASAGADMIVTGTIVEEVKDVAAKVAEIVSAIKS.

Mg(2+) contacts are provided by D23 and S52. Sn-glycerol 1-phosphate-binding positions include 171–177 (YLEAGSG), 203–204 (GG), and 225–226 (GT).

The protein belongs to the GGGP/HepGP synthase family. Group II subfamily. Mg(2+) serves as cofactor.

It is found in the cytoplasm. The enzyme catalyses sn-glycerol 1-phosphate + (2E,6E,10E)-geranylgeranyl diphosphate = sn-3-O-(geranylgeranyl)glycerol 1-phosphate + diphosphate. It participates in membrane lipid metabolism; glycerophospholipid metabolism. Functionally, prenyltransferase that catalyzes the transfer of the geranylgeranyl moiety of geranylgeranyl diphosphate (GGPP) to the C3 hydroxyl of sn-glycerol-1-phosphate (G1P). This reaction is the first ether-bond-formation step in the biosynthesis of archaeal membrane lipids. The polypeptide is Geranylgeranylglyceryl phosphate synthase (Methanosarcina acetivorans (strain ATCC 35395 / DSM 2834 / JCM 12185 / C2A)).